Reading from the N-terminus, the 336-residue chain is D-alanine--D-alanine ligase (336 aa).

The 207-residue stretch at 124 to 330 folds into the ATP-grasp domain; sequence KMWFSALGIP…FTEYLSLVIN (207 aa). 154–209 provides a ligand contact to ATP; that stretch reads ALENWGSIFVKAASQGSSVGCYKVDDSSKVAGVLKDAFGYAPYVIVEKTIKARELE. Residues aspartate 284, glutamate 297, and asparagine 299 each contribute to the Mg(2+) site.

The protein belongs to the D-alanine--D-alanine ligase family. The cofactor is Mg(2+). Mn(2+) serves as cofactor.

The protein resides in the cytoplasm. It carries out the reaction 2 D-alanine + ATP = D-alanyl-D-alanine + ADP + phosphate + H(+). It participates in cell wall biogenesis; peptidoglycan biosynthesis. Functionally, cell wall formation. This chain is D-alanine--D-alanine ligase, found in Shewanella sp. (strain MR-4).